We begin with the raw amino-acid sequence, 433 residues long: Protein slt1 (433 aa).

Disordered regions lie at residues 159–184 (SPEE…SEYA), 200–234 (NAPE…EELS), and 252–433 (SNKR…DEDA). 2 stretches are compositionally biased toward polar residues: residues 172–184 (DQQT…SEYA) and 215–228 (TLPN…QASV). Phosphoserine is present on residues serine 227, serine 229, and serine 269. The span at 343-353 (IDTKAGEKLTD) shows a compositional bias: basic and acidic residues. Over residues 385–421 (EGSNNHEQGSFNEPKSNVDSNDSASPKRPSSQASLRH) the composition is skewed to polar residues. Phosphoserine is present on residues serine 409, serine 415, and serine 418.

This chain is Protein slt1 (slt1), found in Schizosaccharomyces pombe (strain 972 / ATCC 24843) (Fission yeast).